A 610-amino-acid chain; its full sequence is Zinc metalloproteinase-disintegrin-like 4a (610 aa).

An N-terminal signal peptide occupies residues methionine 1–serine 20. The propeptide occupies valine 21 to proline 189. A Peptidase M12B domain is found at lysine 199–proline 395. N-linked (GlcNAc...) asparagine glycosylation occurs at asparagine 218. Aspartate 286 contributes to the Ca(2+) binding site. Disulfide bonds link cysteine 310/cysteine 390, cysteine 350/cysteine 374, and cysteine 352/cysteine 357. Histidine 335 provides a ligand contact to Zn(2+). Glutamate 336 is a catalytic residue. Positions 339 and 345 each coordinate Zn(2+). Residues cysteine 390, valine 405, asparagine 408, phenylalanine 410, glutamate 412, glutamate 415, and aspartate 418 each coordinate Ca(2+). The Disintegrin domain occupies proline 403–asparagine 488. 14 disulfide bridges follow: cysteine 406/cysteine 435, cysteine 417/cysteine 430, cysteine 419/cysteine 425, cysteine 429/cysteine 452, cysteine 443/cysteine 449, cysteine 448/cysteine 474, cysteine 461/cysteine 481, cysteine 468/cysteine 499, cysteine 492/cysteine 504, cysteine 511/cysteine 561, cysteine 526/cysteine 572, cysteine 539/cysteine 549, cysteine 556/cysteine 598, and cysteine 592/cysteine 603. Positions glutamate 467–aspartate 469 match the D/ECD-tripeptide motif.

Belongs to the venom metalloproteinase (M12B) family. P-III subfamily. Requires Zn(2+) as cofactor. Expressed by the venom gland.

It localises to the secreted. Its function is as follows. Snake venom metalloproteinase that impairs hemostasis in the envenomed animal. In Crotalus adamanteus (Eastern diamondback rattlesnake), this protein is Zinc metalloproteinase-disintegrin-like 4a.